A 190-amino-acid chain; its full sequence is Imidazoleglycerol-phosphate dehydratase (190 aa).

This sequence belongs to the imidazoleglycerol-phosphate dehydratase family.

The protein localises to the cytoplasm. The enzyme catalyses D-erythro-1-(imidazol-4-yl)glycerol 3-phosphate = 3-(imidazol-4-yl)-2-oxopropyl phosphate + H2O. Its pathway is amino-acid biosynthesis; L-histidine biosynthesis; L-histidine from 5-phospho-alpha-D-ribose 1-diphosphate: step 6/9. The sequence is that of Imidazoleglycerol-phosphate dehydratase from Sulfurovum sp. (strain NBC37-1).